Consider the following 337-residue polypeptide: Glyceraldehyde-3-phosphate dehydrogenase (337 aa).

NAD(+)-binding positions include Thr11 to Ile12 and Gly110. Ser139–Asn141 provides a ligand contact to D-glyceraldehyde 3-phosphate. The active-site Nucleophile is the Cys140. Arg168 is an NAD(+) binding site. D-glyceraldehyde 3-phosphate is bound at residue His194–Gly195. Residue Gln301 coordinates NAD(+).

The protein belongs to the glyceraldehyde-3-phosphate dehydrogenase family. Homotetramer.

It is found in the cytoplasm. The enzyme catalyses D-glyceraldehyde 3-phosphate + phosphate + NADP(+) = (2R)-3-phospho-glyceroyl phosphate + NADPH + H(+). The catalysed reaction is D-glyceraldehyde 3-phosphate + phosphate + NAD(+) = (2R)-3-phospho-glyceroyl phosphate + NADH + H(+). Its pathway is carbohydrate degradation; glycolysis; pyruvate from D-glyceraldehyde 3-phosphate: step 1/5. This chain is Glyceraldehyde-3-phosphate dehydrogenase (gap), found in Methanothermobacter thermautotrophicus (strain ATCC 29096 / DSM 1053 / JCM 10044 / NBRC 100330 / Delta H) (Methanobacterium thermoautotrophicum).